We begin with the raw amino-acid sequence, 371 residues long: Transmembrane protein 229A (371 aa).

The segment at 1–30 is disordered; sequence MAGSDVASEGPSPRDGATRRPGATGGLRSQ. The next 6 helical transmembrane spans lie at 51 to 71, 117 to 137, 235 to 255, 269 to 289, 301 to 321, and 334 to 354; these read LPAWMRLYFYGMHGITLDVLV, AFLFNFLLYPSAHVGLQTLAG, FLFFGMHGFLDEIFFTFFFNV, LWSFFMYGSCSFVVEKLYFHL, VPIYVIFIYAWEFSWGLGLRM, and LNFMGLITLMYLPGWLFLSVY.

It belongs to the TMEM229 family.

It is found in the membrane. This chain is Transmembrane protein 229A (Tmem229a), found in Mus musculus (Mouse).